The chain runs to 258 residues: Ribonuclease PH (258 aa).

Residues arginine 86 and 124 to 126 (GTR) contribute to the phosphate site.

This sequence belongs to the RNase PH family. Homohexameric ring arranged as a trimer of dimers.

The catalysed reaction is tRNA(n+1) + phosphate = tRNA(n) + a ribonucleoside 5'-diphosphate. Its function is as follows. Phosphorolytic 3'-5' exoribonuclease that plays an important role in tRNA 3'-end maturation. Removes nucleotide residues following the 3'-CCA terminus of tRNAs; can also add nucleotides to the ends of RNA molecules by using nucleoside diphosphates as substrates, but this may not be physiologically important. Probably plays a role in initiation of 16S rRNA degradation (leading to ribosome degradation) during starvation. This is Ribonuclease PH from Caldicellulosiruptor saccharolyticus (strain ATCC 43494 / DSM 8903 / Tp8T 6331).